We begin with the raw amino-acid sequence, 111 residues long: Dynein light chain Tctex-type (111 aa).

The protein belongs to the dynein light chain Tctex-type family.

It localises to the cytoplasm. Its subcellular location is the cytoskeleton. Acts as a non-catalytic accessory component of a dynein complex. This chain is Dynein light chain Tctex-type (dlc1), found in Schizosaccharomyces pombe (strain 972 / ATCC 24843) (Fission yeast).